Here is a 462-residue protein sequence, read N- to C-terminus: Squalene synthase ERG9 (462 aa).

The chain crosses the membrane as a helical span at residues 406–426 (AVVLFGVVIAALVCISGLMLG).

Belongs to the phytoene/squalene synthase family. Mg(2+) serves as cofactor.

Its subcellular location is the endoplasmic reticulum membrane. It is found in the microsome. The catalysed reaction is 2 (2E,6E)-farnesyl diphosphate + NADPH + H(+) = squalene + 2 diphosphate + NADP(+). The enzyme catalyses 2 (2E,6E)-farnesyl diphosphate + NADH + H(+) = squalene + 2 diphosphate + NAD(+). It participates in terpene metabolism; lanosterol biosynthesis; lanosterol from farnesyl diphosphate: step 1/3. Its pathway is steroid metabolism; ergosterol biosynthesis. Squalene synthase; part of the third module of ergosterol biosynthesis pathway that includes the late steps of the pathway. ERG9 produces squalene from 2 farnesyl pyrophosphate moieties. The third module or late pathway involves the ergosterol synthesis itself through consecutive reactions that mainly occur in the endoplasmic reticulum (ER) membrane. Firstly, the squalene synthase ERG9 catalyzes the condensation of 2 farnesyl pyrophosphate moieties to form squalene, which is the precursor of all steroids. Squalene synthase is crucial for balancing the incorporation of farnesyl diphosphate (FPP) into sterol and nonsterol isoprene synthesis. Secondly, squalene is converted into lanosterol by the consecutive action of the squalene epoxidase ERG1 and the lanosterol synthase ERG7. Then, the delta(24)-sterol C-methyltransferase ERG6 methylates lanosterol at C-24 to produce eburicol. Eburicol is the substrate of the sterol 14-alpha demethylase encoded by CYP51A, CYP51B and CYP51C, to yield 4,4,24-trimethyl ergosta-8,14,24(28)-trienol. CYP51B encodes the enzyme primarily responsible for sterol 14-alpha-demethylation, and plays an essential role in ascospore formation. CYP51A encodes an additional sterol 14-alpha-demethylase, induced on ergosterol depletion and responsible for the intrinsic variation in azole sensitivity. The third CYP51 isoform, CYP51C, does not encode a sterol 14-alpha-demethylase, but is required for full virulence on host wheat ears. The C-14 reductase ERG24 then reduces the C14=C15 double bond which leads to 4,4-dimethylfecosterol. A sequence of further demethylations at C-4, involving the C-4 demethylation complex containing the C-4 methylsterol oxidases ERG25, the sterol-4-alpha-carboxylate 3-dehydrogenase ERG26 and the 3-keto-steroid reductase ERG27, leads to the production of fecosterol via 4-methylfecosterol. ERG28 has a role as a scaffold to help anchor ERG25, ERG26 and ERG27 to the endoplasmic reticulum. The C-8 sterol isomerase ERG2 then catalyzes the reaction which results in unsaturation at C-7 in the B ring of sterols and thus converts fecosterol to episterol. The sterol-C5-desaturases ERG3A and ERG3BB then catalyze the introduction of a C-5 double bond in the B ring to produce 5-dehydroepisterol. The C-22 sterol desaturases ERG5A and ERG5B further convert 5-dehydroepisterol into ergosta-5,7,22,24(28)-tetraen-3beta-ol by forming the C-22(23) double bond in the sterol side chain. Finally, ergosta-5,7,22,24(28)-tetraen-3beta-ol is substrate of the C-24(28) sterol reductase ERG4 to produce ergosterol. The sequence is that of Squalene synthase ERG9 from Gibberella zeae (strain ATCC MYA-4620 / CBS 123657 / FGSC 9075 / NRRL 31084 / PH-1) (Wheat head blight fungus).